The sequence spans 602 residues: Elongation factor 4 (602 aa).

Residues 7–188 (ENIRNFSIIA…AIIDLVPPPK (182 aa)) enclose the tr-type G domain. Residues 19-24 (DHGKST) and 135-138 (NKID) each bind GTP.

It belongs to the TRAFAC class translation factor GTPase superfamily. Classic translation factor GTPase family. LepA subfamily.

The protein localises to the cell inner membrane. The enzyme catalyses GTP + H2O = GDP + phosphate + H(+). Required for accurate and efficient protein synthesis under certain stress conditions. May act as a fidelity factor of the translation reaction, by catalyzing a one-codon backward translocation of tRNAs on improperly translocated ribosomes. Back-translocation proceeds from a post-translocation (POST) complex to a pre-translocation (PRE) complex, thus giving elongation factor G a second chance to translocate the tRNAs correctly. Binds to ribosomes in a GTP-dependent manner. The chain is Elongation factor 4 from Chlamydia pneumoniae (Chlamydophila pneumoniae).